The sequence spans 77 residues: uncharacterized protein (77 aa).

Residues 11–65 (FARLRREKGLTQEEVEARSGFSQQYLSSLERGRRNPTVITLYELAQALGVSHVEL) form the HTH cro/C1-type domain. A DNA-binding region (H-T-H motif) is located at residues 22–41 (QEEVEARSGFSQQYLSSLER).

This is an uncharacterized protein from Sinorhizobium fredii (strain NBRC 101917 / NGR234).